Reading from the N-terminus, the 602-residue chain is Elongation factor 4 (602 aa).

The region spanning 8-190 (DLIRNFSIVA…AIVHRLPPPK (183 aa)) is the tr-type G domain. Residues 20–25 (DHGKST) and 137–140 (NKID) each bind GTP.

It belongs to the TRAFAC class translation factor GTPase superfamily. Classic translation factor GTPase family. LepA subfamily.

The protein localises to the cell inner membrane. The enzyme catalyses GTP + H2O = GDP + phosphate + H(+). Functionally, required for accurate and efficient protein synthesis under certain stress conditions. May act as a fidelity factor of the translation reaction, by catalyzing a one-codon backward translocation of tRNAs on improperly translocated ribosomes. Back-translocation proceeds from a post-translocation (POST) complex to a pre-translocation (PRE) complex, thus giving elongation factor G a second chance to translocate the tRNAs correctly. Binds to ribosomes in a GTP-dependent manner. This Cereibacter sphaeroides (strain KD131 / KCTC 12085) (Rhodobacter sphaeroides) protein is Elongation factor 4.